Here is a 707-residue protein sequence, read N- to C-terminus: Keratin, type II cytoskeletal 2 epidermal (707 aa).

The segment at 1–20 (MSCQISCRSRRGGGGGGGGG) is disordered. Positions 1 to 198 (MSCQISCRSR…DPEIQNVKSQ (198 aa)) are head. Position 22 is an asymmetric dimethylarginine (R22). Phosphoserine occurs at positions 25 and 28. Low complexity predominate over residues 29–38 (AVVSGGSRRS). The tract at residues 29-59 (AVVSGGSRRSNTSFSCISRHGGGRGGSGGGG) is disordered. The residue at position 52 (R52) is an Omega-N-methylarginine. S64 carries the post-translational modification Phosphoserine. Residues 199-234 (EREQIKTLNNKFASFIDKVRFLEQQNQVLRTKWELL) are coil 1A. One can recognise an IF rod domain in the interval 199 to 512 (EREQIKTLNN…KLLEGEECRM (314 aa)). Positions 235–253 (QQLDVGSRTTNLDPIFQAY) are linker 1. The interval 254 to 345 (IGMLKKQVDR…TLYDAELSQL (92 aa)) is coil 1B. Residues 346–369 (QQDVTDTNVILSMDNNRNLDLDSI) are linker 12. The tract at residues 370-508 (IAEVQNQYEM…ATYRKLLEGE (139 aa)) is coil 2. The tail stretch occupies residues 509–707 (ECRMSGDFSD…CGSGVTFSFR (199 aa)). The segment at 531–707 (SSVASKTGFG…CGSGVTFSFR (177 aa)) is disordered. Gly residues predominate over residues 539 to 700 (FGSGGQSSGG…GSGSGEGCGS (162 aa)). Residues R555, R593, R607, and R675 each carry the omega-N-methylarginine modification.

The protein belongs to the intermediate filament family. As to quaternary structure, heterotetramer of two type I and two type II keratins. Associates with KRT10. In terms of tissue distribution, expressed predominantly in the suprabasal layers of the plantar epidermis outside of the footpads (at protein level). Expressed in the suprabasal layers of the interfollicular epidermis of the ear, in the interscale regions distant from the hair follicles in the tail, and in the soles of the footpads (at protein level). Expressed mainly in the middle spinous and granular cells of the epidermis of adult tail, nipple and footsole skin. Also found in ear.

Its subcellular location is the cytoplasm. Its function is as follows. Probably contributes to terminal cornification. Associated with keratinocyte activation, proliferation and keratinization. Required for maintenance of corneocytes and keratin filaments in suprabasal keratinocytes in the epidermis of the ear, potentially via moderation of expression and localization of keratins and their partner proteins. Plays a role in the establishment of the epidermal barrier on plantar skin. The polypeptide is Keratin, type II cytoskeletal 2 epidermal (Mus musculus (Mouse)).